Reading from the N-terminus, the 263-residue chain is Putative cysteine-rich repeat secretory protein 31 (263 aa).

The N-terminal stretch at methionine 1–serine 32 is a signal peptide. 2 consecutive Gnk2-homologous domains span residues tyrosine 39 to valine 141 and tyrosine 146 to phenylalanine 260.

This sequence belongs to the cysteine-rich repeat secretory protein family.

It is found in the secreted. This chain is Putative cysteine-rich repeat secretory protein 31 (CRRSP31), found in Arabidopsis thaliana (Mouse-ear cress).